The chain runs to 488 residues: Glutamyl-tRNA(Gln) amidotransferase subunit A (488 aa).

Residues Lys-77 and Ser-152 each act as charge relay system in the active site. Ser-176 acts as the Acyl-ester intermediate in catalysis.

Belongs to the amidase family. GatA subfamily. In terms of assembly, heterotrimer of A, B and C subunits.

It catalyses the reaction L-glutamyl-tRNA(Gln) + L-glutamine + ATP + H2O = L-glutaminyl-tRNA(Gln) + L-glutamate + ADP + phosphate + H(+). In terms of biological role, allows the formation of correctly charged Gln-tRNA(Gln) through the transamidation of misacylated Glu-tRNA(Gln) in organisms which lack glutaminyl-tRNA synthetase. The reaction takes place in the presence of glutamine and ATP through an activated gamma-phospho-Glu-tRNA(Gln). This is Glutamyl-tRNA(Gln) amidotransferase subunit A from Streptococcus mutans serotype c (strain ATCC 700610 / UA159).